The following is a 312-amino-acid chain: Olfactory receptor 2T8 (312 aa).

Residues 1 to 26 (MENGSYTSYFILLGLFNHTRAHQVLF) are Extracellular-facing. N3 and N17 each carry an N-linked (GlcNAc...) asparagine glycan. A helical transmembrane segment spans residues 27 to 47 (MMVLSIVLTSLFGNSLMILLI). The Cytoplasmic portion of the chain corresponds to 48-55 (HWDHRLHT). Residues 56–76 (PMYFLLSQLSLMDVMLVSTTV) form a helical membrane-spanning segment. Topologically, residues 77 to 96 (PKMAADYLTGSKAISRAGCG) are extracellular. An intrachain disulfide couples C95 to C177. A helical membrane pass occupies residues 97–117 (AQIFFLPTLGGGECFLLAAMA). Residues 118 to 143 (YDRYAAVCHPLRYPTLMSWQLCLRMN) lie on the Cytoplasmic side of the membrane. A helical transmembrane segment spans residues 144–164 (LSCWLLGAADGLLQAVATLSF). At 165–201 (PYCGAHEIDHFFCETPVLVRLACADTSVFENAMYICC) the chain is on the extracellular side. A helical transmembrane segment spans residues 202 to 222 (VLMLLVPFSLILSSYGLILAA). Residues 223-234 (VLHMRSTEARKK) are Cytoplasmic-facing. A helical transmembrane segment spans residues 235-255 (AFATCSSHVAVVGLFYGAAIF). Residues 256 to 269 (TYMRPKSHRSTNHD) lie on the Extracellular side of the membrane. The chain crosses the membrane as a helical span at residues 270 to 290 (KVVSAFYTMFTPLLNPLIYSV). Over 291 to 312 (KNSEVKGALTRCMGRCVALSRE) the chain is Cytoplasmic.

This sequence belongs to the G-protein coupled receptor 1 family.

Its subcellular location is the cell membrane. In terms of biological role, odorant receptor. This Homo sapiens (Human) protein is Olfactory receptor 2T8 (OR2T8).